The sequence spans 430 residues: MMNTEGNNGNKPLGLWNVVSIGIGAMVGAGIFALLGQAALLMEASTWVAFAFGGIVAMFSGYAYARLGASYPSNGGIIDFFRRGLGNGVFSLALSLLYLLTLAVSIAMVARAFGAYAVQFLHEGSQEEHLILLYALGIIAVMTLFNSLSNHAVGRLEVILVGIKMMILLLLIIAGVWSLQPAHISVSAPPSSGAFFSCIGITFLAYAGFGMMANAADKVKDPQVIMPRAFLVAIGVTTLLYISLALVLLSDVSALELEKYADTAVAQAASPLLGHVGYVIVVIGALLATASAINANLFAVFNIMDNMGSERELPKLMNKSLWRQSTWGNIIVVVLIMLMTAALNLGSLASVASATFLICYLAVFVVAIRLRHDIHASLPILIVGTLVMLLVIVGFIYSLWSQGSRALIWIIGSLLLSLIVAMVMKRNKTV.

Topologically, residues 1–14 (MMNTEGNNGNKPLG) are cytoplasmic. A helical transmembrane segment spans residues 15 to 35 (LWNVVSIGIGAMVGAGIFALL). Topologically, residues 36 to 38 (GQA) are periplasmic. The chain crosses the membrane as a helical span at residues 39-59 (ALLMEASTWVAFAFGGIVAMF). The Cytoplasmic segment spans residues 60–88 (SGYAYARLGASYPSNGGIIDFFRRGLGNG). A helical transmembrane segment spans residues 89 to 109 (VFSLALSLLYLLTLAVSIAMV). Residues 110–128 (ARAFGAYAVQFLHEGSQEE) lie on the Periplasmic side of the membrane. The chain crosses the membrane as a helical span at residues 129-149 (HLILLYALGIIAVMTLFNSLS). Residues 150–157 (NHAVGRLE) lie on the Cytoplasmic side of the membrane. Residues 158 to 178 (VILVGIKMMILLLLIIAGVWS) traverse the membrane as a helical segment. Residues 179–192 (LQPAHISVSAPPSS) lie on the Periplasmic side of the membrane. A helical membrane pass occupies residues 193–213 (GAFFSCIGITFLAYAGFGMMA). Over 214 to 228 (NAADKVKDPQVIMPR) the chain is Cytoplasmic. Residues 229 to 249 (AFLVAIGVTTLLYISLALVLL) form a helical membrane-spanning segment. The Periplasmic segment spans residues 250–272 (SDVSALELEKYADTAVAQAASPL). The helical transmembrane segment at 273-293 (LGHVGYVIVVIGALLATASAI) threads the bilayer. Residues 294–325 (NANLFAVFNIMDNMGSERELPKLMNKSLWRQS) are Cytoplasmic-facing. A helical membrane pass occupies residues 326 to 346 (TWGNIIVVVLIMLMTAALNLG). Serine 347 is a topological domain (periplasmic). A helical membrane pass occupies residues 348-368 (LASVASATFLICYLAVFVVAI). The Cytoplasmic segment spans residues 369–379 (RLRHDIHASLP). The chain crosses the membrane as a helical span at residues 380-400 (ILIVGTLVMLLVIVGFIYSLW). The Periplasmic segment spans residues 401–403 (SQG). A helical membrane pass occupies residues 404–424 (SRALIWIIGSLLLSLIVAMVM). Topologically, residues 425–430 (KRNKTV) are cytoplasmic.

The protein belongs to the amino acid-polyamine-organocation (APC) superfamily.

The protein localises to the cell inner membrane. In terms of biological role, probable amino-acid or metabolite transport protein. The protein is Inner membrane transport protein YbaT (ybaT) of Escherichia coli (strain K12).